The sequence spans 42 residues: Photosystem I reaction center subunit IX (42 aa).

The chain crosses the membrane as a helical span at residues 7–27 (FLSTAPVLIMALLTFTAGLLI).

This sequence belongs to the PsaJ family.

Its subcellular location is the cellular thylakoid membrane. In terms of biological role, may help in the organization of the PsaE and PsaF subunits. The polypeptide is Photosystem I reaction center subunit IX (Rippkaea orientalis (strain PCC 8801 / RF-1) (Cyanothece sp. (strain PCC 8801))).